The following is a 365-amino-acid chain: tRNA N6-adenosine threonylcarbamoyltransferase (365 aa).

Fe cation-binding residues include His119 and His123. Residues 141–145 (LVSGG), Asp174, Gly187, and Asn289 contribute to the substrate site. Asp317 provides a ligand contact to Fe cation. A disordered region spans residues 342 to 365 (ARPRWPLDSKSPAMLGSGKKGAKA).

The protein belongs to the KAE1 / TsaD family. It depends on Fe(2+) as a cofactor.

It localises to the cytoplasm. It catalyses the reaction L-threonylcarbamoyladenylate + adenosine(37) in tRNA = N(6)-L-threonylcarbamoyladenosine(37) in tRNA + AMP + H(+). Functionally, required for the formation of a threonylcarbamoyl group on adenosine at position 37 (t(6)A37) in tRNAs that read codons beginning with adenine. Is involved in the transfer of the threonylcarbamoyl moiety of threonylcarbamoyl-AMP (TC-AMP) to the N6 group of A37, together with TsaE and TsaB. TsaD likely plays a direct catalytic role in this reaction. This Roseobacter denitrificans (strain ATCC 33942 / OCh 114) (Erythrobacter sp. (strain OCh 114)) protein is tRNA N6-adenosine threonylcarbamoyltransferase.